Here is a 66-residue protein sequence, read N- to C-terminus: DNA gyrase inhibitor YacG (66 aa).

Zn(2+) contacts are provided by cysteine 9, cysteine 12, cysteine 28, and cysteine 32.

The protein belongs to the DNA gyrase inhibitor YacG family. Interacts with GyrB. Zn(2+) serves as cofactor.

Inhibits all the catalytic activities of DNA gyrase by preventing its interaction with DNA. Acts by binding directly to the C-terminal domain of GyrB, which probably disrupts DNA binding by the gyrase. The chain is DNA gyrase inhibitor YacG from Pseudomonas fluorescens (strain Pf0-1).